A 130-amino-acid polypeptide reads, in one-letter code: Small ribosomal subunit protein uS8 (130 aa).

The protein belongs to the universal ribosomal protein uS8 family. In terms of assembly, part of the 30S ribosomal subunit. Contacts proteins S5 and S12.

In terms of biological role, one of the primary rRNA binding proteins, it binds directly to 16S rRNA central domain where it helps coordinate assembly of the platform of the 30S subunit. The sequence is that of Small ribosomal subunit protein uS8 from Actinobacillus succinogenes (strain ATCC 55618 / DSM 22257 / CCUG 43843 / 130Z).